A 127-amino-acid chain; its full sequence is Apolipoprotein C-IV (127 aa).

An N-terminal signal peptide occupies residues 1 to 27 (MSLLRNRLQDLPALCLCVLVLACIGAC).

Belongs to the apolipoprotein C4 family.

It is found in the secreted. Its function is as follows. May participate in lipoprotein metabolism. This Papio hamadryas (Hamadryas baboon) protein is Apolipoprotein C-IV (APOC4).